We begin with the raw amino-acid sequence, 267 residues long: uncharacterized protein (267 aa).

A phosphoserine mark is found at S210 and S224.

As to expression, testis. Down-regulated in men with spermatocyte arrest.

In terms of biological role, essential for normal spermatogenesis and male fertility. This is an uncharacterized protein from Homo sapiens (Human).